Consider the following 89-residue polypeptide: Elongation factor 1-beta (89 aa).

It belongs to the EF-1-beta/EF-1-delta family.

Functionally, promotes the exchange of GDP for GTP in EF-1-alpha/GDP, thus allowing the regeneration of EF-1-alpha/GTP that could then be used to form the ternary complex EF-1-alpha/GTP/AAtRNA. This is Elongation factor 1-beta from Methanococcoides burtonii (strain DSM 6242 / NBRC 107633 / OCM 468 / ACE-M).